We begin with the raw amino-acid sequence, 149 residues long: FKBP-type 16 kDa peptidyl-prolyl cis-trans isomerase (149 aa).

The region spanning 2 to 72 (SESVQSNSAV…FSLEPDAAFG (71 aa)) is the PPIase FKBP-type domain.

This sequence belongs to the FKBP-type PPIase family.

The catalysed reaction is [protein]-peptidylproline (omega=180) = [protein]-peptidylproline (omega=0). Its function is as follows. PPIases accelerate the folding of proteins. Substrate specificity carried out with 'Suc-Ala-Xaa-Pro-Phe-4-nitroanilide', where Xaa is the amino acid tested, was found to be Phe &gt; Leu &gt;&gt; Ile &gt; Lys = Ala &gt; Trp &gt; His &gt;&gt; Gln. This is FKBP-type 16 kDa peptidyl-prolyl cis-trans isomerase (fkpB) from Escherichia coli O6:H1 (strain CFT073 / ATCC 700928 / UPEC).